Here is a 210-residue protein sequence, read N- to C-terminus: BAG family molecular chaperone regulator 2 (210 aa).

An N-acetylalanine modification is found at Ala-2. 3 positions are modified to phosphoserine: Ser-20, Ser-31, and Ser-73. Residues 20–60 are a coiled coil; the sequence is SMADRSSRLLESLDQLELRVEALRDAATAVEQEKEILLEMI. The 81-residue stretch at 109–189 folds into the BAG domain; it reads SLKHATRIID…NIDNSDKAIK (81 aa).

In terms of assembly, binds to the ATPase domain of HSP/HSC70 chaperones. May interact with NWD1. Interacts with HSPA1A (via NBD), HSPA1B (via NBD) and HSPA8. May interact with DNJC9; the interaction seems to be histone-dependent.

Functionally, co-chaperone for HSP70 and HSC70 chaperone proteins. Acts as a nucleotide-exchange factor (NEF) promoting the release of ADP from the HSP70 and HSC70 proteins thereby triggering client/substrate protein release. The sequence is that of BAG family molecular chaperone regulator 2 (Bag2) from Mus musculus (Mouse).